The chain runs to 178 residues: Adenine phosphoribosyltransferase (178 aa).

The protein belongs to the purine/pyrimidine phosphoribosyltransferase family. In terms of assembly, homodimer.

It localises to the cytoplasm. The enzyme catalyses AMP + diphosphate = 5-phospho-alpha-D-ribose 1-diphosphate + adenine. The protein operates within purine metabolism; AMP biosynthesis via salvage pathway; AMP from adenine: step 1/1. Functionally, catalyzes a salvage reaction resulting in the formation of AMP, that is energically less costly than de novo synthesis. The sequence is that of Adenine phosphoribosyltransferase from Cereibacter sphaeroides (strain KD131 / KCTC 12085) (Rhodobacter sphaeroides).